We begin with the raw amino-acid sequence, 300 residues long: Actin-related protein 2/3 complex subunit 2 (300 aa).

Lysine 275 and lysine 295 each carry N6-acetyllysine.

Belongs to the ARPC2 family. As to quaternary structure, component of the Arp2/3 complex composed of ACTR2/ARP2, ACTR3/ARP3, ARPC1B/p41-ARC, ARPC2/p34-ARC, ARPC3/p21-ARC, ARPC4/p20-ARC and ARPC5/p16-ARC. Interacts with SHANK3; the interaction probably mediates the association of SHANK3 with the Arp2/3 complex.

It localises to the cytoplasm. The protein localises to the cytoskeleton. The protein resides in the cell projection. Its subcellular location is the synapse. It is found in the synaptosome. It localises to the nucleus. Actin-binding component of the Arp2/3 complex, a multiprotein complex that mediates actin polymerization upon stimulation by nucleation-promoting factor (NPF). The Arp2/3 complex mediates the formation of branched actin networks in the cytoplasm, providing the force for cell motility. Seems to contact the mother actin filament. In addition to its role in the cytoplasmic cytoskeleton, the Arp2/3 complex also promotes actin polymerization in the nucleus, thereby regulating gene transcription and repair of damaged DNA. The Arp2/3 complex promotes homologous recombination (HR) repair in response to DNA damage by promoting nuclear actin polymerization, leading to drive motility of double-strand breaks (DSBs). The chain is Actin-related protein 2/3 complex subunit 2 from Rattus norvegicus (Rat).